Consider the following 91-residue polypeptide: DNA-directed RNA polymerase subunit Rpo11 (91 aa).

This sequence belongs to the archaeal Rpo11/eukaryotic RPB11/RPC19 RNA polymerase subunit family. As to quaternary structure, part of the RNA polymerase complex.

The protein localises to the cytoplasm. It carries out the reaction RNA(n) + a ribonucleoside 5'-triphosphate = RNA(n+1) + diphosphate. Its function is as follows. DNA-dependent RNA polymerase (RNAP) catalyzes the transcription of DNA into RNA using the four ribonucleoside triphosphates as substrates. The polypeptide is DNA-directed RNA polymerase subunit Rpo11 (Methanothrix thermoacetophila (strain DSM 6194 / JCM 14653 / NBRC 101360 / PT) (Methanosaeta thermophila)).